Reading from the N-terminus, the 729-residue chain is Pentatricopeptide repeat-containing protein At5g01110 (729 aa).

The disordered stretch occupies residues 26–45 (TSSSPVFEPSSSSSSSSSSA). The span at 27-45 (SSSPVFEPSSSSSSSSSSA) shows a compositional bias: low complexity. PPR repeat units lie at residues 112 to 147 (TSLS…GVSR), 164 to 198 (NDSV…GFTV), 199 to 233 (SIDA…GVGI), 234 to 268 (NVYT…GVYP), 269 to 303 (DIVT…GFSP), 304 to 338 (GVYT…GLSP), 339 to 373 (DSTT…DVVP), 374 to 408 (DLVC…GLIP), 409 to 443 (DNVI…GCAM), 444 to 478 (DVVT…ALFP), 479 to 513 (DSYT…RIRL), 514 to 548 (DVVT…EILP), 549 to 583 (TPIS…NIKP), 584 to 618 (TVMI…GFVP), 619 to 649 (DCIS…MEEE), 656 to 690 (DVFT…GVNP), and 691 to 725 (DRST…GFSP).

Belongs to the PPR family. P subfamily.

In Arabidopsis thaliana (Mouse-ear cress), this protein is Pentatricopeptide repeat-containing protein At5g01110.